We begin with the raw amino-acid sequence, 310 residues long: Atrochrysone carboxyl ACP thioesterase CPUR_05436 (310 aa).

Zn(2+) is bound by residues His-105, His-107, Asp-109, and His-110. Asp-109 acts as the Proton donor/acceptor in catalysis.

It belongs to the metallo-beta-lactamase superfamily. It depends on Zn(2+) as a cofactor.

The enzyme catalyses atrochrysone carboxyl-[ACP] + H2O = atrochrysone carboxylate + holo-[ACP] + H(+). The protein operates within pigment biosynthesis. Atrochrysone carboxyl ACP thioesterase; part of the ergochrome gene cluster responsible for the typical purple-black color of the ergot sclerotia. The ergochrome gene cluster produces several ergot pigments including the yellow ergochrome secalonic acid and its derivatives, as well as the red anthraquinones endocrocin and clavorubin. The pathway begins with the synthesis of atrochrysone thioester by the polyketide synthase (PKS) CPUR_05437. The atrochrysone carboxyl ACP thioesterase CPUR_05436 then breaks the thioester bond and releases the atrochrysone carboxylic acid from CPUR_05437. The atrochrysone carboxylic acid is then converted to atrochrysone which is further transformed into emodin anthrone. The next step is performed by the anthrone oxygenase CPUR_05434 that catalyzes the oxidation of emodinanthrone to emodin. Emodin is further modified to yield monodictyphenone via several steps involving CPUR_05427, CPUR_05428, CPUR_05429 and CPUR_05430. The short chain dehydrogenase/reductase CPUR_05418 then catalyzes the C-5 ketoreduction to give the xanthone skeleton of the monomeric units. Ergochromes formation requires further dimerization steps of different xanthone units, probably catalyzed by the cytochrome P450 monooxygenase CPUR_05419. CPUR_05425, CPUR_05426 and CPUR_05431 are unique to Claviceps, thus it is likely that they are involved in further modification of xanthone units or in their dimerization. The yellow ergochromes and the red anthraquinone pigments endocrocin and clavorubin are products from the same PKS derived precursors and the latter are likely shunt products in the pathway of xanthone biosynthesis. It is proposed that atrochrysone carboxylic acid released from the PKS CPUR_05437 can also be converted to endocrocin anthrone which is further oxidized into endocrocin by CPUR_05435. Endocrocin could be then modified to clavorubin, possibly by CPUR_05423 and CPUR_05431. Clavorubin is the principal anthraquinone metabolite produced by the cluster with a much higher yield compared to endocrocin. In Claviceps purpurea (strain 20.1) (Ergot fungus), this protein is Atrochrysone carboxyl ACP thioesterase CPUR_05436.